Reading from the N-terminus, the 512-residue chain is Cytochrome P450 1A1 (512 aa).

The interval 29 to 40 is mitochondrial targeting signal; the sequence is SRPRVPKGLKNP. An O-linked (GlcNAc) serine glycan is attached at S67. F224 serves as a coordination point for substrate. C457 serves as a coordination point for heme.

This sequence belongs to the cytochrome P450 family. As to quaternary structure, interacts with cytosolic chaperones HSP70 and HSP90; this interaction is required for initial targeting to mitochondria. Interacts (via mitochondrial targeting signal) with TOMM40 (via N-terminus); this interaction is required for translocation across the mitochondrial outer membrane. Heme is required as a cofactor.

It is found in the endoplasmic reticulum membrane. The protein resides in the mitochondrion inner membrane. Its subcellular location is the microsome membrane. The protein localises to the cytoplasm. The catalysed reaction is an organic molecule + reduced [NADPH--hemoprotein reductase] + O2 = an alcohol + oxidized [NADPH--hemoprotein reductase] + H2O + H(+). It carries out the reaction estrone + reduced [NADPH--hemoprotein reductase] + O2 = 2-hydroxyestrone + oxidized [NADPH--hemoprotein reductase] + H2O + H(+). It catalyses the reaction estrone + reduced [NADPH--hemoprotein reductase] + O2 = 4-hydroxyestrone + oxidized [NADPH--hemoprotein reductase] + H2O + H(+). The enzyme catalyses estrone + reduced [NADPH--hemoprotein reductase] + O2 = 6alpha-hydroxyestrone + oxidized [NADPH--hemoprotein reductase] + H2O + H(+). The catalysed reaction is estrone + reduced [NADPH--hemoprotein reductase] + O2 = 15alpha-hydroxyestrone + oxidized [NADPH--hemoprotein reductase] + H2O + H(+). It carries out the reaction estrone + reduced [NADPH--hemoprotein reductase] + O2 = 16alpha-hydroxyestrone + oxidized [NADPH--hemoprotein reductase] + H2O + H(+). It catalyses the reaction 17beta-estradiol + reduced [NADPH--hemoprotein reductase] + O2 = 2-hydroxy-17beta-estradiol + oxidized [NADPH--hemoprotein reductase] + H2O + H(+). The enzyme catalyses 17beta-estradiol + reduced [NADPH--hemoprotein reductase] + O2 = 4-hydroxy-17beta-estradiol + oxidized [NADPH--hemoprotein reductase] + H2O + H(+). The catalysed reaction is 17beta-estradiol + reduced [NADPH--hemoprotein reductase] + O2 = 6alpha-hydroxy-17beta-estradiol + oxidized [NADPH--hemoprotein reductase] + H2O + H(+). It carries out the reaction 17beta-estradiol + reduced [NADPH--hemoprotein reductase] + O2 = 7alpha-hydroxy-17beta-estradiol + oxidized [NADPH--hemoprotein reductase] + H2O + H(+). It catalyses the reaction 17beta-estradiol + reduced [NADPH--hemoprotein reductase] + O2 = 15alpha-hydroxy-17beta-estradiol + oxidized [NADPH--hemoprotein reductase] + H2O + H(+). The enzyme catalyses (5Z,8Z,11Z)-eicosatrienoate + reduced [NADPH--hemoprotein reductase] + O2 = 19-hydroxy-(5Z,8Z,11Z)-eicosatrienoate + oxidized [NADPH--hemoprotein reductase] + H2O + H(+). The catalysed reaction is (5Z,8Z,11Z,14Z)-eicosatetraenoate + reduced [NADPH--hemoprotein reductase] + O2 = 16-hydroxy-(5Z,8Z,11Z,14Z)-eicosatetraenoate + oxidized [NADPH--hemoprotein reductase] + H2O + H(+). It carries out the reaction (5Z,8Z,11Z,14Z)-eicosatetraenoate + reduced [NADPH--hemoprotein reductase] + O2 = 17-hydroxy-(5Z,8Z,11Z,14Z)-eicosatetraenoate + oxidized [NADPH--hemoprotein reductase] + H2O + H(+). It catalyses the reaction (5Z,8Z,11Z,14Z)-eicosatetraenoate + reduced [NADPH--hemoprotein reductase] + O2 = 18-hydroxy-(5Z,8Z,11Z,14Z)-eicosatetraenoate + oxidized [NADPH--hemoprotein reductase] + H2O + H(+). The enzyme catalyses (5Z,8Z,11Z,14Z)-eicosatetraenoate + reduced [NADPH--hemoprotein reductase] + O2 = 19-hydroxy-(5Z,8Z,11Z,14Z)-eicosatetraenoate + oxidized [NADPH--hemoprotein reductase] + H2O + H(+). The catalysed reaction is (5Z,8Z,11Z,14Z,17Z)-eicosapentaenoate + reduced [NADPH--hemoprotein reductase] + O2 = 19-hydroxy-(5Z,8Z,11Z,14Z,17Z)-eicosapentaenoate + oxidized [NADPH--hemoprotein reductase] + H2O + H(+). It carries out the reaction (5Z,8Z,11Z,14Z)-eicosatetraenoate + reduced [NADPH--hemoprotein reductase] + O2 = (8R,9S)-epoxy-(5Z,11Z,14Z)-eicosatrienoate + oxidized [NADPH--hemoprotein reductase] + H2O + H(+). It catalyses the reaction (5Z,8Z,11Z,14Z)-eicosatetraenoate + reduced [NADPH--hemoprotein reductase] + O2 = (11R,12S)-epoxy-(5Z,8Z,14Z)-eicosatrienoate + oxidized [NADPH--hemoprotein reductase] + H2O + H(+). The enzyme catalyses (5Z,8Z,11Z,14Z)-eicosatetraenoate + reduced [NADPH--hemoprotein reductase] + O2 = (14S,15R)-epoxy-(5Z,8Z,11Z)-eicosatrienoate + oxidized [NADPH--hemoprotein reductase] + H2O + H(+). The catalysed reaction is (5Z,8Z,11Z,14Z)-eicosatetraenoate + reduced [NADPH--hemoprotein reductase] + O2 = (14R,15S)-epoxy-(5Z,8Z,11Z)-eicosatrienoate + oxidized [NADPH--hemoprotein reductase] + H2O + H(+). It carries out the reaction (5Z,8Z,11Z,14Z,17Z)-eicosapentaenoate + reduced [NADPH--hemoprotein reductase] + O2 = (17R,18S)-epoxy-(5Z,8Z,11Z,14Z)-eicosatetraenoate + oxidized [NADPH--hemoprotein reductase] + H2O + H(+). It catalyses the reaction (4Z,7Z,10Z,13Z,16Z,19Z)-docosahexaenoate + reduced [NADPH--hemoprotein reductase] + O2 = (19S,20R)-epoxy-(4Z,7Z,10Z,13Z,16Z)-docosapentaenoate + oxidized [NADPH--hemoprotein reductase] + H2O + H(+). The enzyme catalyses (4Z,7Z,10Z,13Z,16Z,19Z)-docosahexaenoate + reduced [NADPH--hemoprotein reductase] + O2 = (19R,20S)-epoxy-(4Z,7Z,10Z,13Z,16Z)-docosapentaenoate + oxidized [NADPH--hemoprotein reductase] + H2O + H(+). The catalysed reaction is all-trans-retinol + reduced [NADPH--hemoprotein reductase] + O2 = all-trans-retinal + oxidized [NADPH--hemoprotein reductase] + 2 H2O + H(+). It carries out the reaction all-trans-retinal + reduced [NADPH--hemoprotein reductase] + O2 = all-trans-retinoate + oxidized [NADPH--hemoprotein reductase] + H2O + 2 H(+). It catalyses the reaction (13S)-hydroperoxy-(9Z,11E)-octadecadienoate = 13-oxo-(9Z,11E)-octadecadienoate + H2O. The enzyme catalyses (12S)-hydroperoxy-(5Z,8Z,10E,14Z)-eicosatetraenoate = 12-oxo-(5Z,8Z,10E,14Z)-eicosatetraenoate + H2O. The catalysed reaction is (15S)-hydroperoxy-(5Z,8Z,11Z,13E)-eicosatetraenoate = 15-oxo-(5Z,8Z,11Z,13E)-eicosatetraenoate + H2O. It carries out the reaction (5S)-hydroperoxy-(6E,8Z,11Z,14Z)-eicosatetraenoate = 5-oxo-(6E,8Z,11Z,14Z)-eicosatetraenoate + H2O. Its pathway is steroid hormone biosynthesis. It participates in lipid metabolism; fatty acid metabolism. The protein operates within cofactor metabolism; retinol metabolism. Functionally, a cytochrome P450 monooxygenase involved in the metabolism of various endogenous substrates, including fatty acids, steroid hormones and vitamins. Mechanistically, uses molecular oxygen inserting one oxygen atom into a substrate, and reducing the second into a water molecule, with two electrons provided by NADPH via cytochrome P450 reductase (CPR; NADPH-ferrihemoprotein reductase). Catalyzes the hydroxylation of carbon-hydrogen bonds. Exhibits high catalytic activity for the formation of hydroxyestrogens from estrone (E1) and 17beta-estradiol (E2), namely 2-hydroxy E1 and E2, as well as D-ring hydroxylated E1 and E2 at the C15alpha and C16alpha positions. Displays different regioselectivities for polyunsaturated fatty acids (PUFA) hydroxylation. Catalyzes the epoxidation of double bonds of certain PUFA. Converts arachidonic acid toward epoxyeicosatrienoic acid (EET) regioisomers, 8,9-, 11,12-, and 14,15-EET, that function as lipid mediators in the vascular system. Displays an absolute stereoselectivity in the epoxidation of eicosapentaenoic acid (EPA) producing the 17(R),18(S) enantiomer. May play an important role in all-trans retinoic acid biosynthesis in extrahepatic tissues. Catalyzes two successive oxidative transformation of all-trans retinol to all-trans retinal and then to the active form all-trans retinoic acid. May also participate in eicosanoids metabolism by converting hydroperoxide species into oxo metabolites (lipoxygenase-like reaction, NADPH-independent). The chain is Cytochrome P450 1A1 (CYP1A1) from Macaca mulatta (Rhesus macaque).